The chain runs to 616 residues: Dihydroxy-acid dehydratase (616 aa).

Mg(2+) is bound at residue aspartate 81. Cysteine 122 serves as a coordination point for [2Fe-2S] cluster. Residues aspartate 123 and lysine 124 each coordinate Mg(2+). Lysine 124 bears the N6-carboxylysine mark. Cysteine 195 provides a ligand contact to [2Fe-2S] cluster. Glutamate 491 contributes to the Mg(2+) binding site. Serine 517 functions as the Proton acceptor in the catalytic mechanism.

It belongs to the IlvD/Edd family. Homodimer. It depends on [2Fe-2S] cluster as a cofactor. Mg(2+) serves as cofactor.

The catalysed reaction is (2R)-2,3-dihydroxy-3-methylbutanoate = 3-methyl-2-oxobutanoate + H2O. It catalyses the reaction (2R,3R)-2,3-dihydroxy-3-methylpentanoate = (S)-3-methyl-2-oxopentanoate + H2O. The protein operates within amino-acid biosynthesis; L-isoleucine biosynthesis; L-isoleucine from 2-oxobutanoate: step 3/4. Its pathway is amino-acid biosynthesis; L-valine biosynthesis; L-valine from pyruvate: step 3/4. Functionally, functions in the biosynthesis of branched-chain amino acids. Catalyzes the dehydration of (2R,3R)-2,3-dihydroxy-3-methylpentanoate (2,3-dihydroxy-3-methylvalerate) into 2-oxo-3-methylpentanoate (2-oxo-3-methylvalerate) and of (2R)-2,3-dihydroxy-3-methylbutanoate (2,3-dihydroxyisovalerate) into 2-oxo-3-methylbutanoate (2-oxoisovalerate), the penultimate precursor to L-isoleucine and L-valine, respectively. The protein is Dihydroxy-acid dehydratase of Escherichia coli O9:H4 (strain HS).